We begin with the raw amino-acid sequence, 116 residues long: uncharacterized protein (116 aa).

Residues 5–23 (LLAVETWYMLILSFRFLFF) form a helical membrane-spanning segment.

It localises to the membrane. This is an uncharacterized protein from Saccharomyces cerevisiae (strain ATCC 204508 / S288c) (Baker's yeast).